A 210-amino-acid polypeptide reads, in one-letter code: MSAVRSKICGITRIEDALAAVEAGADAIGLVFYAKSPRSVNVLQARAIIAALPPFVTTVGLFVNASRCELNETLDAVPLDMLQFHGDETPDECESYQRPYIKALRVKSGDDIAAACAAYSGARGILLDTYVEGVPGGTGEAFDWSLIPPGLSKPIILAGGLTPTNVGAAIEQVQPYAVDVSGGVEQGKGIKDHSKIRAFMQAVRNSSGAM.

The protein belongs to the TrpF family.

The catalysed reaction is N-(5-phospho-beta-D-ribosyl)anthranilate = 1-(2-carboxyphenylamino)-1-deoxy-D-ribulose 5-phosphate. The protein operates within amino-acid biosynthesis; L-tryptophan biosynthesis; L-tryptophan from chorismate: step 3/5. The polypeptide is N-(5'-phosphoribosyl)anthranilate isomerase (Pseudomonas fluorescens (strain SBW25)).